We begin with the raw amino-acid sequence, 833 residues long: F1 capsule-anchoring protein (833 aa).

The N-terminal stretch at 1 to 25 is a signal peptide; that stretch reads MRYSKLFLCAGLTLATLPCWGRAYT. An intrachain disulfide couples Cys807 to Cys829.

It belongs to the fimbrial export usher family.

The protein resides in the cell outer membrane. A probable role in capsular biogenesis. It is likely that the caf1A molecule binds F1 antigen subunits during the extracellular secretion process. The polypeptide is F1 capsule-anchoring protein (caf1A) (Yersinia pestis).